The following is a 30-amino-acid chain: L-serine dehydratase, alpha chain (30 aa).

It belongs to the iron-sulfur dependent L-serine dehydratase family. Heterodimer of an alpha chain and a beta chain. It depends on [4Fe-4S] cluster as a cofactor.

The enzyme catalyses L-serine = pyruvate + NH4(+). The protein operates within carbohydrate biosynthesis; gluconeogenesis. This Anaerotignum propionicum (Clostridium propionicum) protein is L-serine dehydratase, alpha chain.